A 315-amino-acid chain; its full sequence is Lipoyl synthase (315 aa).

Residues C62, C67, C73, C88, C92, C95, and S302 each coordinate [4Fe-4S] cluster. In terms of domain architecture, Radical SAM core spans 73-291 (CFGHGTATFM…GELAKKLGFS (219 aa)).

It belongs to the radical SAM superfamily. Lipoyl synthase family. The cofactor is [4Fe-4S] cluster.

Its subcellular location is the cytoplasm. The enzyme catalyses [[Fe-S] cluster scaffold protein carrying a second [4Fe-4S](2+) cluster] + N(6)-octanoyl-L-lysyl-[protein] + 2 oxidized [2Fe-2S]-[ferredoxin] + 2 S-adenosyl-L-methionine + 4 H(+) = [[Fe-S] cluster scaffold protein] + N(6)-[(R)-dihydrolipoyl]-L-lysyl-[protein] + 4 Fe(3+) + 2 hydrogen sulfide + 2 5'-deoxyadenosine + 2 L-methionine + 2 reduced [2Fe-2S]-[ferredoxin]. Its pathway is protein modification; protein lipoylation via endogenous pathway; protein N(6)-(lipoyl)lysine from octanoyl-[acyl-carrier-protein]: step 2/2. Its function is as follows. Catalyzes the radical-mediated insertion of two sulfur atoms into the C-6 and C-8 positions of the octanoyl moiety bound to the lipoyl domains of lipoate-dependent enzymes, thereby converting the octanoylated domains into lipoylated derivatives. This chain is Lipoyl synthase, found in Coxiella burnetii (strain CbuG_Q212) (Coxiella burnetii (strain Q212)).